The following is a 174-amino-acid chain: MLAAPRELSYIPQPVVSSKQSPRSGLSNRRRESRARQKILLLGLVLMGFVIGLSLTFLTMQVLIKGYKIDSLKRELSTLQRENEQLQLEVARLKAPERVARVATTKLGMVEPKTEQIYYVPEQAGNGKQVQVATTEPSRPAVTGAAPGRQAWWVALAEALHQWLEPARQAGAGV.

The Cytoplasmic portion of the chain corresponds to 1-38 (MLAAPRELSYIPQPVVSSKQSPRSGLSNRRRESRARQK). Residues 39–59 (ILLLGLVLMGFVIGLSLTFLT) traverse the membrane as a helical segment. Topologically, residues 60–174 (MQVLIKGYKI…EPARQAGAGV (115 aa)) are extracellular.

This sequence belongs to the FtsL family.

It is found in the cell membrane. In terms of biological role, essential cell division protein. The sequence is that of Cell division protein FtsL from Moorella thermoacetica (strain ATCC 39073 / JCM 9320).